Reading from the N-terminus, the 389-residue chain is MLLALAQWLQGDASFLRLFTYLTFRAVMATITALGIGLVCGPWVIRKLTQMKVGQAVRKDGPQSHLVKSGTPTMGGVLILIGIAVATLLWGDLTNRFIWIVMLVTFGFGVIGWVDDYRKVVYKDPRGMSSREKYFWQSVIGLFAAVYLAFSVSEANNVRVFDLFMAWVRSGLSMGLPARADLMLPFLKSISYPLGVWGFIVLTYFVIVGASNAVNLTDGLDGLVIMPVVLVGGSLGVFAYVMGSSVYSKYLLFPHIPGAGELLIFCSAMGGAGLAFLWYNTHPAQVFMGDVGALALGGALGTVAVIVRQEIVLFIMGGIFVAETLSVMLQVSWFKYTKKRYGEGRRLLKMAPLHHHFELSGWKETQVVVRFWIITLMLCLFGLSTLKLR.

10 helical membrane passes run 25–45, 73–93, 97–117, 135–155, 190–210, 222–242, 258–278, 286–306, 311–331, and 366–386; these read RAVM…PWVI, TMGG…WGDL, FIWI…VDDY, FWQS…VSEA, ISYP…IVGA, GLVI…AYVM, GAGE…AFLW, VFMG…VAVI, IVLF…MLQV, and QVVV…LSTL.

This sequence belongs to the glycosyltransferase 4 family. MraY subfamily. Mg(2+) serves as cofactor.

Its subcellular location is the cell inner membrane. It catalyses the reaction UDP-N-acetyl-alpha-D-muramoyl-L-alanyl-gamma-D-glutamyl-meso-2,6-diaminopimeloyl-D-alanyl-D-alanine + di-trans,octa-cis-undecaprenyl phosphate = di-trans,octa-cis-undecaprenyl diphospho-N-acetyl-alpha-D-muramoyl-L-alanyl-D-glutamyl-meso-2,6-diaminopimeloyl-D-alanyl-D-alanine + UMP. Its pathway is cell wall biogenesis; peptidoglycan biosynthesis. Functionally, catalyzes the initial step of the lipid cycle reactions in the biosynthesis of the cell wall peptidoglycan: transfers peptidoglycan precursor phospho-MurNAc-pentapeptide from UDP-MurNAc-pentapeptide onto the lipid carrier undecaprenyl phosphate, yielding undecaprenyl-pyrophosphoryl-MurNAc-pentapeptide, known as lipid I. The chain is Phospho-N-acetylmuramoyl-pentapeptide-transferase from Burkholderia ambifaria (strain ATCC BAA-244 / DSM 16087 / CCUG 44356 / LMG 19182 / AMMD) (Burkholderia cepacia (strain AMMD)).